We begin with the raw amino-acid sequence, 361 residues long: MKPSIHSLAHQTMQEWVLEQGEKKFRADQIWEWLYRKRVQSFEEMTNLSKDLIAKLNDQFVVNPLKQRIVQESADGTVKYLFELPDGMLIETVLMCQHYGLSVCVTTQVGCNIGCTFCSSGLIKKQRDLNNGEIVAQIMLVQKYFDERGQDERVSHIVVMGIGEPFDNYNNVLNFFRTINDDKGMAIGARHITVSTSGLAHKIRDFADEGVQVNLAVSLHAPNNELRSSIMKINRAFPIEKLFAAIEYYIETTNRRVTFEYIMLNEVNDGVEQALELTELLKNIKKLSYVNLIPYNPVSEHDQYSRSPKERVLAFYDTLKKKGVNCVVRQEHGTDIDAACGQLRSNTMKRDRQKAVAAVNP.

Residue E91 is the Proton acceptor of the active site. The 233-residue stretch at 97–329 (QHYGLSVCVT…KKKGVNCVVR (233 aa)) folds into the Radical SAM core domain. C104 and C340 are disulfide-bonded. Residues C111, C115, and C118 each coordinate [4Fe-4S] cluster. S-adenosyl-L-methionine is bound by residues 163–164 (GE), S195, 218–220 (SLH), and N296. The active-site S-methylcysteine intermediate is the C340.

The protein belongs to the radical SAM superfamily. RlmN family. It depends on [4Fe-4S] cluster as a cofactor.

Its subcellular location is the cytoplasm. It carries out the reaction adenosine(2503) in 23S rRNA + 2 reduced [2Fe-2S]-[ferredoxin] + 2 S-adenosyl-L-methionine = 2-methyladenosine(2503) in 23S rRNA + 5'-deoxyadenosine + L-methionine + 2 oxidized [2Fe-2S]-[ferredoxin] + S-adenosyl-L-homocysteine. The enzyme catalyses adenosine(37) in tRNA + 2 reduced [2Fe-2S]-[ferredoxin] + 2 S-adenosyl-L-methionine = 2-methyladenosine(37) in tRNA + 5'-deoxyadenosine + L-methionine + 2 oxidized [2Fe-2S]-[ferredoxin] + S-adenosyl-L-homocysteine. Its function is as follows. Specifically methylates position 2 of adenine 2503 in 23S rRNA and position 2 of adenine 37 in tRNAs. The chain is Probable dual-specificity RNA methyltransferase RlmN from Streptococcus pneumoniae serotype 19F (strain G54).